A 304-amino-acid chain; its full sequence is Chromo domain-containing protein cec-1 (304 aa).

In terms of domain architecture, Chromo spans 8–66 (YTVESILEHRKKKGKSEFYIKWLGYDHTHNSWEPKENIVDPTLIEAFFTREAARKAEIK). Residues 63-73 (AEIKAKKDKMA) show a composition bias toward basic and acidic residues. Disordered regions lie at residues 63–235 (AEIK…EIQL) and 248–304 (VEPA…AIIE). A compositionally biased stretch (low complexity) spans 75 to 102 (GKKGASSKASASVSKASASTPARGAKAA). The segment covering 106 to 116 (PPKKSPPKRQR) has biased composition (basic residues). Over residues 122–141 (IRPDSDTDEEHSSADKKSKA) the composition is skewed to basic and acidic residues. Composition is skewed to acidic residues over residues 142 to 152 (EDEEEVEDDEE), 163 to 204 (EEPE…DVQL), and 212 to 233 (EEEE…EEEI). Low complexity predominate over residues 248-292 (VEPAVATPEPSEPSSSEKAVVENGSSSAAAGNSASKPEVSAVEVV). Positions 293–304 (TVEDDDDIAIIE) are enriched in acidic residues.

It is found in the nucleus. The protein resides in the chromosome. The chain is Chromo domain-containing protein cec-1 (cec-1) from Caenorhabditis elegans.